Reading from the N-terminus, the 585-residue chain is uncharacterized protein (585 aa).

Positions 1 to 34 (MNAYVRDSESVYSESYPPENFISNEPEKSKDKDN) are disordered. At 1–89 (MNAYVRDSES…KRRLKSRHIQ (89 aa)) the chain is on the cytoplasmic side. Low complexity predominate over residues 10–19 (SVYSESYPPE). The span at 25 to 34 (EPEKSKDKDN) shows a compositional bias: basic and acidic residues. Residues 90 to 110 (MIGIGGAIGTGVWVGSSKSLY) form a helical membrane-spanning segment. Residues 111-121 (RGGAASVLIDY) lie on the Extracellular side of the membrane. The chain crosses the membrane as a helical span at residues 122–142 (CIVGTMVFCTVYALGELAVAF). At 143-159 (PTRGSFVTHATRFIDES) the chain is on the cytoplasmic side. A helical transmembrane segment spans residues 160-180 (WGFALSWNYVFSFIVTIPLEL). The Extracellular portion of the chain corresponds to 181 to 193 (TTGTMMIKYWTNL). The chain crosses the membrane as a helical span at residues 194 to 214 (NSGIWVTVFIVFLFFINIFGV). At 215–221 (KGYGEME) the chain is on the cytoplasmic side. The helical transmembrane segment at 222–242 (FIMSTIKVVAMCGFIILGIII) threads the bilayer. The Extracellular portion of the chain corresponds to 243–271 (DCGGVPTDHRGYMGTHIFRENAFRHKFKG). The chain crosses the membrane as a helical span at residues 272-292 (FCAVFTSAAFSFSGTEYVGVA). The Cytoplasmic segment spans residues 293–313 (AAETENPAKAFPVAVRQTLFR). Residues 314 to 334 (IAIFYILSLFIVSLLISGADP) traverse the membrane as a helical segment. The Extracellular segment spans residues 335 to 361 (RLTSYHGVDASPFVLAIKDANIKALPS). The chain crosses the membrane as a helical span at residues 362 to 382 (ILNAIILISVISSANAQLYAG). At 383-407 (SRAIHSLGCNGFAPKCFTLVDREGR) the chain is on the cytoplasmic side. Residues 408 to 428 (PLVALLILFLFMFLGYLVETG) form a helical membrane-spanning segment. The Extracellular portion of the chain corresponds to 429-436 (QYDTVFDW). Residues 437–457 (MLSISGLGTLFCWGSICLAHI) traverse the membrane as a helical segment. Topologically, residues 458 to 486 (RYRAAMKHQNRSLKEVGFVSPFNVYASYY) are cytoplasmic. The chain crosses the membrane as a helical span at residues 487–507 (AFILVCLVLAAEFYVSIFPVG). At 508–511 (GKPD) the chain is on the extracellular side. The helical transmembrane segment at 512 to 532 (ASAFFENYLSAPVILVFFICH) threads the bilayer. Residues 533-585 (KLYYKTKRITLSNMDLETDFAYKTPVEEEEEEEKSAGSLSIKQRMKKLSDMMC) lie on the Cytoplasmic side of the membrane.

This sequence belongs to the amino acid-polyamine-organocation (APC) superfamily.

Its subcellular location is the endoplasmic reticulum. It localises to the membrane. This is an uncharacterized protein from Schizosaccharomyces pombe (strain 972 / ATCC 24843) (Fission yeast).